A 312-amino-acid polypeptide reads, in one-letter code: Olfactory receptor 2T8 (312 aa).

Topologically, residues Met1 to Phe26 are extracellular. Residues Asn3 and Asn17 are each glycosylated (N-linked (GlcNAc...) asparagine). A helical transmembrane segment spans residues Met27–Ile47. Residues His48–Thr55 lie on the Cytoplasmic side of the membrane. A helical transmembrane segment spans residues Pro56 to Val76. The Extracellular segment spans residues Pro77–Gly96. A disulfide bridge connects residues Cys95 and Cys177. Residues Ala97–Ala117 form a helical membrane-spanning segment. Topologically, residues Tyr118–Asn143 are cytoplasmic. The helical transmembrane segment at Leu144 to Phe164 threads the bilayer. Over Pro165–Cys201 the chain is Extracellular. The helical transmembrane segment at Val202–Ala222 threads the bilayer. Residues Val223–Lys234 lie on the Cytoplasmic side of the membrane. Residues Ala235–Phe255 form a helical membrane-spanning segment. Residues Thr256–Asp269 are Extracellular-facing. A helical transmembrane segment spans residues Lys270 to Val290. The Cytoplasmic segment spans residues Lys291–Glu312.

It belongs to the G-protein coupled receptor 1 family.

Its subcellular location is the cell membrane. Its function is as follows. Odorant receptor. In Homo sapiens (Human), this protein is Olfactory receptor 2T8 (OR2T8).